The primary structure comprises 207 residues: Small ribosomal subunit protein uS4 (207 aa).

Residues 96-156 (SRLDNTVYRM…KKSHKQSRIR (61 aa)) enclose the S4 RNA-binding domain.

It belongs to the universal ribosomal protein uS4 family. Part of the 30S ribosomal subunit. Contacts protein S5. The interaction surface between S4 and S5 is involved in control of translational fidelity.

One of the primary rRNA binding proteins, it binds directly to 16S rRNA where it nucleates assembly of the body of the 30S subunit. Functionally, with S5 and S12 plays an important role in translational accuracy. The chain is Small ribosomal subunit protein uS4 from Blochmanniella pennsylvanica (strain BPEN).